The primary structure comprises 84 residues: RQC P-site tRNA stabilizing factor (84 aa).

Residues 1 to 64 (MRIDKFLQSV…IEEYTILQIP (64 aa)) enclose the S4 RNA-binding domain.

This sequence belongs to the RqcP family. In terms of assembly, associates with stalled 50S ribosomal subunits. Binds to RqcH, 23S rRNA and the P-site tRNA. Does not require RqcH for association with 50S subunits.

In terms of biological role, key component of the ribosome quality control system (RQC), a ribosome-associated complex that mediates the extraction of incompletely synthesized nascent chains from stalled ribosomes and their subsequent degradation. RqcH recruits Ala-charged tRNA, and with RqcP directs the elongation of stalled nascent chains on 50S ribosomal subunits, leading to non-templated C-terminal alanine extensions (Ala tail). The Ala tail promotes nascent chain degradation. RqcP is associated with the translocation-like movement of the peptidyl-tRNA from the A-site into the P-site. This chain is RQC P-site tRNA stabilizing factor, found in Helicobacter pylori (strain ATCC 700392 / 26695) (Campylobacter pylori).